The sequence spans 208 residues: MIGLIGRKVGMTRVFNEDGVSIPVTVIEIEANRVTQVKTLENDGYSAIQVTTGTKKASRVTKPEAGHFVKAGVEAGRGLWEFRTEGEEFTLGQEINVDIFADVKKVDVTGTSKGKGFAGGVKRWNFRTQDATHGNSLSHRVLGSIGQNQTPGRVFKGKKMAGHLGAERVTVQSLEVVRVDAERKLLLVKGAVPGATNSNVIVKPAVKA.

N5-methylglutamine is present on Q149.

The protein belongs to the universal ribosomal protein uL3 family. As to quaternary structure, part of the 50S ribosomal subunit. Forms a cluster with proteins L14 and L19. Methylated by PrmB.

One of the primary rRNA binding proteins, it binds directly near the 3'-end of the 23S rRNA, where it nucleates assembly of the 50S subunit. The sequence is that of Large ribosomal subunit protein uL3 from Haemophilus ducreyi (strain 35000HP / ATCC 700724).